Consider the following 253-residue polypeptide: MAILEATNIHKSYGTKLNKQEVLKGIDIRVEKGEFVSIMGASGSGKTTLLNVLSSIDKLSNGSIKIEGSEMTRLKEKELAQFRKKHLGFIFQEYNLLDTLTVKENILLPLSITKIPRKAADEKFKQVATELGIYEIKDKYPNEISGGQKQRASAARAFIHEPSIIFADEPTGALDSKSASDLLGKLQQLNEKLRATIVMVTHDPVAASYCSRVIFIKDGQIYTQLHKGDESRQTFFKDIMKTQGVLGGVQNDH.

The ABC transporter domain occupies 4–243 (LEATNIHKSY…TFFKDIMKTQ (240 aa)). 40 to 47 (GASGSGKT) is a binding site for ATP.

It belongs to the ABC transporter superfamily. The complex is composed of two ATP-binding proteins (BceA) and two transmembrane proteins (BceB).

In terms of biological role, part of the ABC transporter complex BceAB (TC 3.A.1.123.5) involved in bacitracin export. Responsible for energy coupling to the transport system. The sequence is that of Bacitracin export ATP-binding protein BceA (bceA) from Halalkalibacterium halodurans (strain ATCC BAA-125 / DSM 18197 / FERM 7344 / JCM 9153 / C-125) (Bacillus halodurans).